The following is a 217-amino-acid chain: Thiamine-phosphate synthase (217 aa).

4-amino-2-methyl-5-(diphosphooxymethyl)pyrimidine is bound by residues 45–49 (QFRQK) and Asn-81. Asp-82 and Asp-101 together coordinate Mg(2+). 4-amino-2-methyl-5-(diphosphooxymethyl)pyrimidine is bound at residue Ser-120. Position 147 to 149 (147 to 149 (TPS)) interacts with 2-[(2R,5Z)-2-carboxy-4-methylthiazol-5(2H)-ylidene]ethyl phosphate. Residue Lys-150 coordinates 4-amino-2-methyl-5-(diphosphooxymethyl)pyrimidine. Residues Gly-179 and 197-198 (IS) each bind 2-[(2R,5Z)-2-carboxy-4-methylthiazol-5(2H)-ylidene]ethyl phosphate.

This sequence belongs to the thiamine-phosphate synthase family. The cofactor is Mg(2+).

The catalysed reaction is 2-[(2R,5Z)-2-carboxy-4-methylthiazol-5(2H)-ylidene]ethyl phosphate + 4-amino-2-methyl-5-(diphosphooxymethyl)pyrimidine + 2 H(+) = thiamine phosphate + CO2 + diphosphate. It catalyses the reaction 2-(2-carboxy-4-methylthiazol-5-yl)ethyl phosphate + 4-amino-2-methyl-5-(diphosphooxymethyl)pyrimidine + 2 H(+) = thiamine phosphate + CO2 + diphosphate. It carries out the reaction 4-methyl-5-(2-phosphooxyethyl)-thiazole + 4-amino-2-methyl-5-(diphosphooxymethyl)pyrimidine + H(+) = thiamine phosphate + diphosphate. The protein operates within cofactor biosynthesis; thiamine diphosphate biosynthesis; thiamine phosphate from 4-amino-2-methyl-5-diphosphomethylpyrimidine and 4-methyl-5-(2-phosphoethyl)-thiazole: step 1/1. In terms of biological role, condenses 4-methyl-5-(beta-hydroxyethyl)thiazole monophosphate (THZ-P) and 2-methyl-4-amino-5-hydroxymethyl pyrimidine pyrophosphate (HMP-PP) to form thiamine monophosphate (TMP). In Helicobacter pylori (strain J99 / ATCC 700824) (Campylobacter pylori J99), this protein is Thiamine-phosphate synthase.